Consider the following 153-residue polypeptide: uncharacterized protein (153 aa).

The first 19 residues, 1–19 (MRKYIPLVLFIFSWPVLCA), serve as a signal peptide directing secretion. Active-site residues include Arg-46, Glu-54, and Arg-88.

The protein belongs to the thermonuclease family.

This is an uncharacterized protein from Escherichia coli O157:H7.